A 98-amino-acid polypeptide reads, in one-letter code: Large ribosomal subunit protein eL21 (98 aa).

The span at 1 to 24 shows a compositional bias: basic residues; that stretch reads MVKKAHSFRRKTRGKLSKHPRRRG. The disordered stretch occupies residues 1 to 27; the sequence is MVKKAHSFRRKTRGKLSKHPRRRGLPP.

This sequence belongs to the eukaryotic ribosomal protein eL21 family.

This is Large ribosomal subunit protein eL21 from Thermococcus gammatolerans (strain DSM 15229 / JCM 11827 / EJ3).